We begin with the raw amino-acid sequence, 29 residues long: Cycloviolacin-O22 (29 aa).

The segment at residues 1 to 29 (GLPICGETCVGGTCNTPGCTCSWPVCTRN) is a cross-link (cyclopeptide (Gly-Asn)). Disulfide bonds link C5-C19, C9-C21, and C14-C26.

Post-translationally, this is a cyclic peptide. As to expression, expressed in roots and runners but not in leaves, petals and petioles (at protein level).

In terms of biological role, probably participates in a plant defense mechanism. The polypeptide is Cycloviolacin-O22 (Viola odorata (Sweet violet)).